Consider the following 365-residue polypeptide: Galactoside alpha-(1,2)-fucosyltransferase 1 (365 aa).

Residues 1 to 8 (MWPLSHRH) lie on the Cytoplasmic side of the membrane. Residues 9–25 (LCLAFLLVCVLSAISFF) form a helical; Signal-anchor for type II membrane protein membrane-spanning segment. Over 26–365 (LHIYQDSIRH…LSPLWTLAEP (340 aa)) the chain is Lumenal. 3 N-linked (GlcNAc...) asparagine glycosylation sites follow: asparagine 65, asparagine 301, and asparagine 327.

This sequence belongs to the glycosyltransferase 11 family.

It localises to the golgi apparatus. The protein localises to the golgi stack membrane. The catalysed reaction is a beta-D-galactosyl-(1-&gt;4)-N-acetyl-beta-D-glucosaminyl derivative + GDP-beta-L-fucose = an alpha-L-Fuc-(1-&gt;2)-beta-D-Gal-(1-&gt;4)-beta-D-GlcNAc derivative + GDP + H(+). The enzyme catalyses a ganglioside GA1 + GDP-beta-L-fucose = a ganglioside Fuc-GA1 + GDP + H(+). It carries out the reaction a beta-D-Gal-(1-&gt;3)-beta-D-GlcNAc-(1-&gt;3)-beta-D-Gal-(1-&gt;4)-beta-D-Glc-(1&lt;-&gt;1')-Cer(d18:1(4E)) + GDP-beta-L-fucose = alpha-L-fucosyl-(1-&gt;2)- beta-D-galactosyl-(1-&gt;3)-N-acetyl-beta-D-glucosaminyl-(1-&gt;3)-beta-D-galactosyl-(1-&gt;4)-beta-D-glucosyl-(1&lt;-&gt;1')-N-acylsphing-4-enine + GDP + H(+). It catalyses the reaction a neolactoside nLc4Cer(d18:1(4E)) + GDP-beta-L-fucose = a neolactoside IV(2)-alpha-Fuc-nLc4Cer(d18:1(4E)) + GDP + H(+). The catalysed reaction is a ganglioside GM1 + GDP-beta-L-fucose = a ganglioside Fuc-GM1 + GDP + H(+). The enzyme catalyses beta-D-galactosyl-(1-&gt;3)-N-acetyl-D-galactosamine + GDP-beta-L-fucose = alpha-L-fucosyl-(1-&gt;2)-beta-D-galactosyl-(1-&gt;3)-N-acetyl-D-galactosamine + GDP + H(+). Its pathway is protein modification; protein glycosylation. Functionally, catalyzes the transfer of L-fucose, from a guanosine diphosphate-beta-L-fucose, to the terminal galactose residue of glycoconjugates through an alpha(1,2) linkage leading to H antigen synthesis that is an intermediate substrate in the synthesis of ABO blood group antigens. H antigen is essential for maturation of the glomerular layer of the main olfactory bulb, in cell migration and early cell-cell contacts during tumor associated angiogenesis. Preferentially fucosylates soluble lactose and to a lesser extent fucosylates glycolipids gangliosides GA1 and GM1a. The chain is Galactoside alpha-(1,2)-fucosyltransferase 1 from Mico humeralifer (Black and white tassel-ear marmoset).